Reading from the N-terminus, the 258-residue chain is Chaperone protein FaeE (258 aa).

The signal sequence occupies residues M1 to A34. Positions K239–K258 are disordered. A compositionally biased stretch (basic and acidic residues) spans A247–K258.

The protein belongs to the periplasmic pilus chaperone family.

The protein resides in the periplasm. Functionally, mediates assembly of pili by forming soluble multimeric complexes with pili subunits as an intermediate step in the assembly process. This protein is involved in K88 pili assembly. Protects pilin protein from proteolytic degradation by DegP and from premature polymerization. The polypeptide is Chaperone protein FaeE (faeE) (Escherichia coli).